A 4830-amino-acid chain; its full sequence is Siderophore peptide synthetase fer3 (4830 aa).

Residues 197–623 (LDQAEKFPDR…LGRMNAEQVK (427 aa)) form an adenylation 1 region. One can recognise a Carrier 1 domain in the interval 751–833 (ANEDPVTQAL…DLIPLLSDTT (83 aa)). Serine 788 is modified (O-(pantetheine 4'-phosphoryl)serine). Residues 879 to 1317 (QKIFPTTATQ…HSLMREPETT (439 aa)) form a condensation 1 region. The segment at 1358 to 1781 (FENKAATEPE…IGRRDDLVKL (424 aa)) is adenylation 2. In terms of domain architecture, Carrier 2 spans 1929-2005 (GEDGDLQCQV…MLIRGLATKT (77 aa)). Serine 1966 bears the O-(pantetheine 4'-phosphoryl)serine mark. Positions 2048-2503 (IPCSTLQEGM…LLDQVVSLLT (456 aa)) are condensation 2. Residues 2573–2977 (AGTPETACIN…LGRRDEQEKI (405 aa)) are adenylation 3. Residues 3122 to 3198 (RPLSSLEREI…DIAAELSDSK (77 aa)) form the Carrier 3 domain. Serine 3159 is subject to O-(pantetheine 4'-phosphoryl)serine. The interval 3232 to 3621 (KVLPCLPSQE…RDRDELRISA (390 aa)) is condensation 3. Positions 3685 to 3760 (TAAEEQIRDL…GLSKLLDQRQ (76 aa)) constitute a Carrier 4 domain. Position 3720 is an O-(pantetheine 4'-phosphoryl)serine (serine 3720). The condensation 4 stretch occupies residues 3779–4199 (RYKATPLQAG…GVQIKAGASD (421 aa)). Positions 4264–4340 (SLSTAEQDIV…RLTVATETRS (77 aa)) constitute a Carrier 5 domain. Residue serine 4301 is modified to O-(pantetheine 4'-phosphoryl)serine. Residues 4381 to 4708 (VLPLLTGQQQ…DLVSRAEHQQ (328 aa)) are condensation 5.

This sequence belongs to the NRP synthetase family.

It functions in the pathway siderophore biosynthesis. Functionally, nonribosomal peptide synthetase; part of the gene cluster that mediates the biosynthesis of siderophore ferrichrome A which is contributing to organismal virulence. The first step of ferrichrome A biosynthesis is performed by the HMG-CoA synthase hcs1 which catalyzes the generation of HMG-CoA and CoA using acetoacetyl-CoA and acetyl-CoA as substrates. The enoyl-CoA isomerase/hydratase fer4 then catalyzes the conversion of hcs1-produced HMG-CoA to methylglutaconyl-CoA. The acyltransferase fer5 then fuses the fer4-generated methylglutaconyl-CoA with sid1-generated hydroxyornithine to yield methylglutaconyl hydroxyornithine. Methylglutaconyl hydroxyornithine is then available for use by the NRPS fer3 to generate ferrichrome A. In Mycosarcoma maydis (Corn smut fungus), this protein is Siderophore peptide synthetase fer3.